A 250-amino-acid chain; its full sequence is Eukaryotic translation initiation factor 2 subunit 2 (250 aa).

The C4-type zinc finger occupies 193–217 (CHTCKSPETQLTKDTRLFFLQCTNC).

The protein belongs to the eIF-2-beta/eIF-5 family. In terms of assembly, eukaryotic translation initiation factor 2 eIF2 is a heterotrimeric complex composed of an alpha, a beta and a gamma subunit.

Its subcellular location is the cytoplasm. The protein localises to the cytosol. Component of the eIF2 complex that functions in the early steps of protein synthesis by forming a ternary complex with GTP and initiator tRNA. This complex binds to a 40S ribosomal subunit, followed by mRNA binding to form a 43S pre-initiation complex (43S PIC). Junction of the 60S ribosomal subunit to form the 80S initiation complex is preceded by hydrolysis of the GTP bound to eIF2 and release of an eIF2-GDP binary complex. In order for eIF2 to recycle and catalyze another round of initiation, the GDP bound to eIF2 must exchange with GTP by way of a reaction catalyzed by eIF2B. The polypeptide is Eukaryotic translation initiation factor 2 subunit 2 (Caenorhabditis elegans).